The primary structure comprises 549 residues: Glucose-6-phosphate isomerase (549 aa).

Residues Lys-80, Lys-228, and Lys-234 each carry the N6-acetyllysine modification. The active-site Proton donor is Glu-355. Catalysis depends on residues His-386 and Lys-514.

Belongs to the GPI family.

It localises to the cytoplasm. The enzyme catalyses alpha-D-glucose 6-phosphate = beta-D-fructose 6-phosphate. It participates in carbohydrate biosynthesis; gluconeogenesis. It functions in the pathway carbohydrate degradation; glycolysis; D-glyceraldehyde 3-phosphate and glycerone phosphate from D-glucose: step 2/4. In terms of biological role, catalyzes the reversible isomerization of glucose-6-phosphate to fructose-6-phosphate. The protein is Glucose-6-phosphate isomerase of Escherichia coli O127:H6 (strain E2348/69 / EPEC).